The chain runs to 266 residues: Glutamate racemase 1 (266 aa).

Substrate is bound by residues 11-12 (DS) and 43-44 (YG). Cysteine 74 (proton donor/acceptor) is an active-site residue. A substrate-binding site is contributed by 75-76 (NT). Cysteine 182 serves as the catalytic Proton donor/acceptor. A substrate-binding site is contributed by 183–184 (TH).

Belongs to the aspartate/glutamate racemases family.

It carries out the reaction L-glutamate = D-glutamate. The protein operates within cell wall biogenesis; peptidoglycan biosynthesis. Functionally, provides the (R)-glutamate required for cell wall biosynthesis. The chain is Glutamate racemase 1 from Caldanaerobacter subterraneus subsp. tengcongensis (strain DSM 15242 / JCM 11007 / NBRC 100824 / MB4) (Thermoanaerobacter tengcongensis).